The primary structure comprises 196 residues: Proteasome subunit beta 1 (196 aa).

Residues methionine 1–alanine 6 constitute a propeptide, removed in mature form; by autocatalysis. Residue threonine 7 is the Nucleophile of the active site.

It belongs to the peptidase T1B family. The 20S proteasome core is composed of 14 alpha and 14 beta subunits that assemble into four stacked heptameric rings, resulting in a barrel-shaped structure. The two inner rings, each composed of seven catalytic beta subunits, are sandwiched by two outer rings, each composed of seven alpha subunits. The catalytic chamber with the active sites is on the inside of the barrel. Has a gated structure, the ends of the cylinder being occluded by the N-termini of the alpha-subunits. Is capped at one or both ends by the proteasome regulatory ATPase, PAN.

The protein resides in the cytoplasm. The catalysed reaction is Cleavage of peptide bonds with very broad specificity.. The formation of the proteasomal ATPase PAN-20S proteasome complex, via the docking of the C-termini of PAN into the intersubunit pockets in the alpha-rings, triggers opening of the gate for substrate entry. Interconversion between the open-gate and close-gate conformations leads to a dynamic regulation of the 20S proteasome proteolysis activity. In terms of biological role, component of the proteasome core, a large protease complex with broad specificity involved in protein degradation. The chain is Proteasome subunit beta 1 from Saccharolobus islandicus (strain Y.N.15.51 / Yellowstone #2) (Sulfolobus islandicus).